We begin with the raw amino-acid sequence, 363 residues long: DNA replication and repair protein RecF (363 aa).

An ATP-binding site is contributed by 30-37 (GPNGSGKT).

It belongs to the RecF family.

The protein localises to the cytoplasm. Functionally, the RecF protein is involved in DNA metabolism; it is required for DNA replication and normal SOS inducibility. RecF binds preferentially to single-stranded, linear DNA. It also seems to bind ATP. This is DNA replication and repair protein RecF from Chlorobium phaeobacteroides (strain BS1).